The chain runs to 576 residues: Proline--tRNA ligase (576 aa).

This sequence belongs to the class-II aminoacyl-tRNA synthetase family. ProS type 1 subfamily. As to quaternary structure, homodimer.

The protein resides in the cytoplasm. It carries out the reaction tRNA(Pro) + L-proline + ATP = L-prolyl-tRNA(Pro) + AMP + diphosphate. Catalyzes the attachment of proline to tRNA(Pro) in a two-step reaction: proline is first activated by ATP to form Pro-AMP and then transferred to the acceptor end of tRNA(Pro). As ProRS can inadvertently accommodate and process non-cognate amino acids such as alanine and cysteine, to avoid such errors it has two additional distinct editing activities against alanine. One activity is designated as 'pretransfer' editing and involves the tRNA(Pro)-independent hydrolysis of activated Ala-AMP. The other activity is designated 'posttransfer' editing and involves deacylation of mischarged Ala-tRNA(Pro). The misacylated Cys-tRNA(Pro) is not edited by ProRS. This is Proline--tRNA ligase from Dechloromonas aromatica (strain RCB).